The following is a 186-amino-acid chain: Elongation factor P (186 aa).

It belongs to the elongation factor P family.

The protein localises to the cytoplasm. Its pathway is protein biosynthesis; polypeptide chain elongation. In terms of biological role, involved in peptide bond synthesis. Stimulates efficient translation and peptide-bond synthesis on native or reconstituted 70S ribosomes in vitro. Probably functions indirectly by altering the affinity of the ribosome for aminoacyl-tRNA, thus increasing their reactivity as acceptors for peptidyl transferase. The polypeptide is Elongation factor P (Shewanella sp. (strain W3-18-1)).